Here is a 473-residue protein sequence, read N- to C-terminus: Probable aspartokinase (473 aa).

ACT domains follow at residues 323–392 (IFGA…FLNN) and 409–473 (VVGA…KTNS).

This sequence belongs to the aspartokinase family.

It catalyses the reaction L-aspartate + ATP = 4-phospho-L-aspartate + ADP. It functions in the pathway amino-acid biosynthesis; L-lysine biosynthesis via DAP pathway; (S)-tetrahydrodipicolinate from L-aspartate: step 1/4. The protein operates within amino-acid biosynthesis; L-methionine biosynthesis via de novo pathway; L-homoserine from L-aspartate: step 1/3. Its pathway is amino-acid biosynthesis; L-threonine biosynthesis; L-threonine from L-aspartate: step 1/5. This chain is Probable aspartokinase, found in Methanocaldococcus jannaschii (strain ATCC 43067 / DSM 2661 / JAL-1 / JCM 10045 / NBRC 100440) (Methanococcus jannaschii).